Consider the following 592-residue polypeptide: Aspartate--tRNA(Asp/Asn) ligase (592 aa).

Glu-182 contacts L-aspartate. Residues 206-209 are aspartate; that stretch reads QIFK. Arg-228 is a binding site for L-aspartate. Residues 228 to 230 and Gln-237 each bind ATP; that span reads RDE. His-455 is an L-aspartate binding site. Glu-489 is a binding site for ATP. Arg-496 serves as a coordination point for L-aspartate. 541-544 serves as a coordination point for ATP; it reads GLDR.

The protein belongs to the class-II aminoacyl-tRNA synthetase family. Type 1 subfamily. As to quaternary structure, homodimer.

It is found in the cytoplasm. The enzyme catalyses tRNA(Asx) + L-aspartate + ATP = L-aspartyl-tRNA(Asx) + AMP + diphosphate. Functionally, aspartyl-tRNA synthetase with relaxed tRNA specificity since it is able to aspartylate not only its cognate tRNA(Asp) but also tRNA(Asn). Reaction proceeds in two steps: L-aspartate is first activated by ATP to form Asp-AMP and then transferred to the acceptor end of tRNA(Asp/Asn). This Caldanaerobacter subterraneus subsp. tengcongensis (strain DSM 15242 / JCM 11007 / NBRC 100824 / MB4) (Thermoanaerobacter tengcongensis) protein is Aspartate--tRNA(Asp/Asn) ligase.